We begin with the raw amino-acid sequence, 341 residues long: L-threonine 3-dehydrogenase (341 aa).

C38 is a binding site for Zn(2+). Active-site charge relay system residues include T40 and H43. Positions 63, 64, 93, 96, 99, and 107 each coordinate Zn(2+). Residues I175, D195, R200, 262-264, and 286-287 each bind NAD(+); these read LGI and IY.

Belongs to the zinc-containing alcohol dehydrogenase family. In terms of assembly, homotetramer. Requires Zn(2+) as cofactor.

It is found in the cytoplasm. The catalysed reaction is L-threonine + NAD(+) = (2S)-2-amino-3-oxobutanoate + NADH + H(+). Its pathway is amino-acid degradation; L-threonine degradation via oxydo-reductase pathway; glycine from L-threonine: step 1/2. Catalyzes the NAD(+)-dependent oxidation of L-threonine to 2-amino-3-ketobutyrate. The sequence is that of L-threonine 3-dehydrogenase from Cronobacter sakazakii (strain ATCC BAA-894) (Enterobacter sakazakii).